Reading from the N-terminus, the 667-residue chain is DNA ligase (667 aa).

NAD(+) is bound by residues 34–38 (DQEYD), 83–84 (SL), and glutamate 114. The N6-AMP-lysine intermediate role is filled by lysine 116. NAD(+) is bound by residues arginine 137, glutamate 170, lysine 286, and lysine 310. Residues cysteine 404, cysteine 407, cysteine 422, and cysteine 427 each coordinate Zn(2+). One can recognise a BRCT domain in the interval 588 to 667 (HLAQKFENYR…EFQQLLSKED (80 aa)).

This sequence belongs to the NAD-dependent DNA ligase family. LigA subfamily. It depends on Mg(2+) as a cofactor. Mn(2+) serves as cofactor.

The catalysed reaction is NAD(+) + (deoxyribonucleotide)n-3'-hydroxyl + 5'-phospho-(deoxyribonucleotide)m = (deoxyribonucleotide)n+m + AMP + beta-nicotinamide D-nucleotide.. Functionally, DNA ligase that catalyzes the formation of phosphodiester linkages between 5'-phosphoryl and 3'-hydroxyl groups in double-stranded DNA using NAD as a coenzyme and as the energy source for the reaction. It is essential for DNA replication and repair of damaged DNA. The polypeptide is DNA ligase (Spiroplasma citri).